Reading from the N-terminus, the 437-residue chain is Glutamate-1-semialdehyde 2,1-aminomutase (437 aa).

An N6-(pyridoxal phosphate)lysine modification is found at K274.

The protein belongs to the class-III pyridoxal-phosphate-dependent aminotransferase family. HemL subfamily. Homodimer. Pyridoxal 5'-phosphate serves as cofactor.

It localises to the cytoplasm. It carries out the reaction (S)-4-amino-5-oxopentanoate = 5-aminolevulinate. It functions in the pathway porphyrin-containing compound metabolism; protoporphyrin-IX biosynthesis; 5-aminolevulinate from L-glutamyl-tRNA(Glu): step 2/2. The chain is Glutamate-1-semialdehyde 2,1-aminomutase from Verminephrobacter eiseniae (strain EF01-2).